A 247-amino-acid chain; its full sequence is Triosephosphate isomerase (247 aa).

Substrate is bound by residues Asn-10 and Lys-12. The Electrophile role is filled by His-95. The active-site Proton acceptor is the Glu-165.

This sequence belongs to the triosephosphate isomerase family. In terms of assembly, homodimer.

The enzyme catalyses D-glyceraldehyde 3-phosphate = dihydroxyacetone phosphate. The protein operates within carbohydrate biosynthesis; gluconeogenesis. It functions in the pathway carbohydrate degradation; glycolysis; D-glyceraldehyde 3-phosphate from glycerone phosphate: step 1/1. In Yarrowia lipolytica (strain CLIB 122 / E 150) (Yeast), this protein is Triosephosphate isomerase (TPI1).